The primary structure comprises 269 residues: 4-hydroxy-tetrahydrodipicolinate reductase (269 aa).

Residues 8-13 and Glu34 contribute to the NAD(+) site; that span reads GAAGRM. An NADP(+)-binding site is contributed by Arg35. Residues 98–100 and 122–125 each bind NAD(+); these read GTT and APNY. Catalysis depends on His155, which acts as the Proton donor/acceptor. His156 contacts (S)-2,3,4,5-tetrahydrodipicolinate. The active-site Proton donor is Lys159. 165–166 contributes to the (S)-2,3,4,5-tetrahydrodipicolinate binding site; it reads GT.

It belongs to the DapB family.

Its subcellular location is the cytoplasm. The enzyme catalyses (S)-2,3,4,5-tetrahydrodipicolinate + NAD(+) + H2O = (2S,4S)-4-hydroxy-2,3,4,5-tetrahydrodipicolinate + NADH + H(+). It carries out the reaction (S)-2,3,4,5-tetrahydrodipicolinate + NADP(+) + H2O = (2S,4S)-4-hydroxy-2,3,4,5-tetrahydrodipicolinate + NADPH + H(+). The protein operates within amino-acid biosynthesis; L-lysine biosynthesis via DAP pathway; (S)-tetrahydrodipicolinate from L-aspartate: step 4/4. Functionally, catalyzes the conversion of 4-hydroxy-tetrahydrodipicolinate (HTPA) to tetrahydrodipicolinate. The chain is 4-hydroxy-tetrahydrodipicolinate reductase from Vibrio parahaemolyticus serotype O3:K6 (strain RIMD 2210633).